The chain runs to 229 residues: ATP synthase subunit a (229 aa).

A run of 7 helical transmembrane segments spans residues 25 to 45 (VHII…VLGA), 58 to 75 (FLEV…SVTG), 81 to 101 (FFPL…IGLV), 110 to 130 (SINT…FIGI), 141 to 161 (FLGP…IGHL), 175 to 195 (MMGH…FFAP), and 196 to 216 (LPIM…FFLL).

It belongs to the ATPase A chain family. In terms of assembly, F-type ATPases have 2 components, CF(1) - the catalytic core - and CF(0) - the membrane proton channel. CF(1) has five subunits: alpha(3), beta(3), gamma(1), delta(1), epsilon(1). CF(0) has three main subunits: a(1), b(2) and c(9-12). The alpha and beta chains form an alternating ring which encloses part of the gamma chain. CF(1) is attached to CF(0) by a central stalk formed by the gamma and epsilon chains, while a peripheral stalk is formed by the delta and b chains.

It is found in the cell inner membrane. In terms of biological role, key component of the proton channel; it plays a direct role in the translocation of protons across the membrane. The polypeptide is ATP synthase subunit a (Desulfosudis oleivorans (strain DSM 6200 / JCM 39069 / Hxd3) (Desulfococcus oleovorans)).